A 443-amino-acid chain; its full sequence is MRLRFWLLIWLLLGFISHQPTPVINSLAVYRHRETDFGVGVRDHPGQHGKTPSPQKLDNLIIIIIGFLRRDTFTILFCTSYLCVSFLKTIFWSRNGHDGSTDVQQRAWRSNRSRQKGLRSICMHTKKRVSSFRGNKIGLKDVITLRRHVETKVRAKIRKRKVTTKINRHDKINGKRKTARKQKMFQRAQELRRRAEDYHKCKIPPSARKPLCNWVRMAAAEHRHSSGLPCWPYLTAEALKNRMGRQPPPPTQQHSITDNSLSLKTPPECLLHPLPPSVDDNIKECPLAPLPPSVDDNLKEYLLVPLPPSPLPPSVDDNLKDCLFVPLPPSPLPPSVDDNLKTPPLATQEAEAEKPPKPKRWRVDEVEQSPKPKRRRADEVEQSPKPKRQREAEAQQLPKPKRRRLSKLRTRHCTQAWAIRINPWVEKKKKIKKQNKTHAPKTN.

Residues 1–18 form the signal peptide; sequence MRLRFWLLIWLLLGFISH. Asn-111 carries an N-linked (GlcNAc...) asparagine glycan. Disordered stretches follow at residues 242–262 and 330–413; these read RMGR…NSLS and SPLP…TRHC. Residues 252–262 show a composition bias toward polar residues; the sequence is QQHSITDNSLS. Over residues 351–393 the composition is skewed to basic and acidic residues; sequence EAEKPPKPKRWRVDEVEQSPKPKRRRADEVEQSPKPKRQREAE. Positions 399 to 412 are enriched in basic residues; that stretch reads KPKRRRLSKLRTRH.

Belongs to the NPIP family.

It localises to the secreted. This is Nuclear pore complex-interacting protein family member B15 (NPIPB15) from Homo sapiens (Human).